The sequence spans 559 residues: CTP synthase (559 aa).

An amidoligase domain region spans residues 1 to 283 (MSTSRTTTNN…DTFLIRRLDL (283 aa)). Ser25 serves as a coordination point for CTP. Ser25 serves as a coordination point for UTP. Residues 26 to 31 (SLGKGL) and Asp83 contribute to the ATP site. Mg(2+) is bound by residues Asp83 and Glu157. Residues 164 to 166 (DIE), 204 to 209 (KTKPTQ), and Lys240 contribute to the CTP site. Residues 204–209 (KTKPTQ) and Lys240 each bind UTP. Residues 308–557 (TVGIVGKYVD…VAAALAAAVT (250 aa)) form the Glutamine amidotransferase type-1 domain. Gly371 lines the L-glutamine pocket. Cys398 functions as the Nucleophile; for glutamine hydrolysis in the catalytic mechanism. Residues 399-402 (LGLQ), Glu421, and Arg482 each bind L-glutamine. Active-site residues include His530 and Glu532.

The protein belongs to the CTP synthase family. Homotetramer.

It carries out the reaction UTP + L-glutamine + ATP + H2O = CTP + L-glutamate + ADP + phosphate + 2 H(+). It catalyses the reaction L-glutamine + H2O = L-glutamate + NH4(+). The enzyme catalyses UTP + NH4(+) + ATP = CTP + ADP + phosphate + 2 H(+). It functions in the pathway pyrimidine metabolism; CTP biosynthesis via de novo pathway; CTP from UDP: step 2/2. Its activity is regulated as follows. Allosterically activated by GTP, when glutamine is the substrate; GTP has no effect on the reaction when ammonia is the substrate. The allosteric effector GTP functions by stabilizing the protein conformation that binds the tetrahedral intermediate(s) formed during glutamine hydrolysis. Inhibited by the product CTP, via allosteric rather than competitive inhibition. Functionally, catalyzes the ATP-dependent amination of UTP to CTP with either L-glutamine or ammonia as the source of nitrogen. Regulates intracellular CTP levels through interactions with the four ribonucleotide triphosphates. The protein is CTP synthase of Corynebacterium efficiens (strain DSM 44549 / YS-314 / AJ 12310 / JCM 11189 / NBRC 100395).